We begin with the raw amino-acid sequence, 296 residues long: Gamma-D-glutamyl-L-lysine dipeptidyl-peptidase (296 aa).

Residues Tyr-90, Asp-199 to Ser-201, and Asp-218 to Ala-219 each bind substrate. Residues Lys-170–Ser-295 form the NlpC/P60 domain. Cys-200 (nucleophile) is an active-site residue. The active-site Proton acceptor is His-253. Residue His-265 is part of the active site.

Belongs to the peptidase C40 family.

The catalysed reaction is The enzyme releases L-Ala-gamma-D-Glu dipeptides from cell wall peptides via cleavage of an L-Ala-gamma-D-Glu-|-L-Lys bond.. Its pathway is cell wall degradation; peptidoglycan degradation. Its function is as follows. Specifically hydrolyzes gamma-D-glutamyl-L-lysine bonds in murein peptides, releasing L-Ala-D-Glu. The polypeptide is Gamma-D-glutamyl-L-lysine dipeptidyl-peptidase (ykfC) (Bacillus subtilis (strain 168)).